The sequence spans 233 residues: Large ribosomal subunit protein uL1 (233 aa).

Belongs to the universal ribosomal protein uL1 family. Part of the 50S ribosomal subunit.

In terms of biological role, binds directly to 23S rRNA. The L1 stalk is quite mobile in the ribosome, and is involved in E site tRNA release. Protein L1 is also a translational repressor protein, it controls the translation of the L11 operon by binding to its mRNA. This chain is Large ribosomal subunit protein uL1, found in Shewanella putrefaciens (strain CN-32 / ATCC BAA-453).